A 380-amino-acid polypeptide reads, in one-letter code: Queuine tRNA-ribosyltransferase (380 aa).

Aspartate 96 (proton acceptor) is an active-site residue. Substrate contacts are provided by residues 96–100 (DSGGF), aspartate 150, glutamine 193, and glycine 220. The tract at residues 251-257 (GVGAPDS) is RNA binding. Aspartate 270 acts as the Nucleophile in catalysis. Residues 275–279 (TRIAR) are RNA binding; important for wobble base 34 recognition. Residues cysteine 308, cysteine 310, cysteine 313, and histidine 339 each contribute to the Zn(2+) site.

This sequence belongs to the queuine tRNA-ribosyltransferase family. In terms of assembly, homodimer. Within each dimer, one monomer is responsible for RNA recognition and catalysis, while the other monomer binds to the replacement base PreQ1. It depends on Zn(2+) as a cofactor.

The catalysed reaction is 7-aminomethyl-7-carbaguanine + guanosine(34) in tRNA = 7-aminomethyl-7-carbaguanosine(34) in tRNA + guanine. It functions in the pathway tRNA modification; tRNA-queuosine biosynthesis. Catalyzes the base-exchange of a guanine (G) residue with the queuine precursor 7-aminomethyl-7-deazaguanine (PreQ1) at position 34 (anticodon wobble position) in tRNAs with GU(N) anticodons (tRNA-Asp, -Asn, -His and -Tyr). Catalysis occurs through a double-displacement mechanism. The nucleophile active site attacks the C1' of nucleotide 34 to detach the guanine base from the RNA, forming a covalent enzyme-RNA intermediate. The proton acceptor active site deprotonates the incoming PreQ1, allowing a nucleophilic attack on the C1' of the ribose to form the product. After dissociation, two additional enzymatic reactions on the tRNA convert PreQ1 to queuine (Q), resulting in the hypermodified nucleoside queuosine (7-(((4,5-cis-dihydroxy-2-cyclopenten-1-yl)amino)methyl)-7-deazaguanosine). The polypeptide is Queuine tRNA-ribosyltransferase (Streptococcus sanguinis (strain SK36)).